Here is a 325-residue protein sequence, read N- to C-terminus: Anthranilate phosphoribosyltransferase (325 aa).

5-phospho-alpha-D-ribose 1-diphosphate contacts are provided by residues G73, 76 to 77 (GD), T81, 83 to 86 (NIST), 100 to 108 (KHGNVSITS), and S112. G73 is an anthranilate binding site. S85 is a Mg(2+) binding site. N103 contributes to the anthranilate binding site. R158 is an anthranilate binding site. Mg(2+) is bound by residues D216 and E217.

It belongs to the anthranilate phosphoribosyltransferase family. As to quaternary structure, homodimer. The cofactor is Mg(2+).

The catalysed reaction is N-(5-phospho-beta-D-ribosyl)anthranilate + diphosphate = 5-phospho-alpha-D-ribose 1-diphosphate + anthranilate. It functions in the pathway amino-acid biosynthesis; L-tryptophan biosynthesis; L-tryptophan from chorismate: step 2/5. Catalyzes the transfer of the phosphoribosyl group of 5-phosphorylribose-1-pyrophosphate (PRPP) to anthranilate to yield N-(5'-phosphoribosyl)-anthranilate (PRA). This is Anthranilate phosphoribosyltransferase from Methanococcus aeolicus (strain ATCC BAA-1280 / DSM 17508 / OCM 812 / Nankai-3).